An 81-amino-acid chain; its full sequence is Exodeoxyribonuclease 7 small subunit (81 aa).

The protein belongs to the XseB family. In terms of assembly, heterooligomer composed of large and small subunits.

The protein resides in the cytoplasm. The enzyme catalyses Exonucleolytic cleavage in either 5'- to 3'- or 3'- to 5'-direction to yield nucleoside 5'-phosphates.. Its function is as follows. Bidirectionally degrades single-stranded DNA into large acid-insoluble oligonucleotides, which are then degraded further into small acid-soluble oligonucleotides. The sequence is that of Exodeoxyribonuclease 7 small subunit from Rhodopseudomonas palustris (strain BisA53).